The chain runs to 134 residues: MSWQAYVDDHLMCDIEGHEGHRLTAAAIVGHDGSVWAQSATFPQFKPEEMNGIMTDFNEPGHLAPTGLHLGGTKYMVIQGEAGAVIRGKKGSGGITIKKTGQALVCGIYEEPVTPGQCNMVVERLEDYLLEQGL.

Residues Cys13 and Cys118 are joined by a disulfide bond. The Involved in PIP2 interaction motif lies at 84–100; that stretch reads AVIRGKKGSGGITIKKT. At Thr114 the chain carries Phosphothreonine.

The protein belongs to the profilin family. As to quaternary structure, occurs in many kinds of cells as a complex with monomeric actin in a 1:1 ratio. Post-translationally, phosphorylated by MAP kinases.

Its subcellular location is the cytoplasm. The protein localises to the cytoskeleton. Binds to actin and affects the structure of the cytoskeleton. At high concentrations, profilin prevents the polymerization of actin, whereas it enhances it at low concentrations. In Olea europaea (Common olive), this protein is Profilin-1.